Here is a 103-residue protein sequence, read N- to C-terminus: Large ribosomal subunit protein uL24 (103 aa).

It belongs to the universal ribosomal protein uL24 family. Part of the 50S ribosomal subunit.

Its function is as follows. One of two assembly initiator proteins, it binds directly to the 5'-end of the 23S rRNA, where it nucleates assembly of the 50S subunit. Functionally, one of the proteins that surrounds the polypeptide exit tunnel on the outside of the subunit. The protein is Large ribosomal subunit protein uL24 of Latilactobacillus sakei subsp. sakei (strain 23K) (Lactobacillus sakei subsp. sakei).